The following is a 139-amino-acid chain: Arsenate reductase (139 aa).

Catalysis depends on nucleophile residues Cys10, Cys82, and Cys89. Cystine bridges form between Cys10/Cys82 and Cys82/Cys89.

Belongs to the low molecular weight phosphotyrosine protein phosphatase family. Thioredoxin-coupled ArsC subfamily.

Its subcellular location is the cytoplasm. It catalyses the reaction arsenate + [thioredoxin]-dithiol + H(+) = arsenite + [thioredoxin]-disulfide + H2O. Functionally, catalyzes the reduction of arsenate [As(V)] to arsenite [As(III)]. This is Arsenate reductase from Shouchella clausii (strain KSM-K16) (Alkalihalobacillus clausii).